The sequence spans 250 residues: Deoxynucleoside-5'-monophosphate kinase (250 aa).

3 residues coordinate ATP: G14, D16, and T17. Residues V44, K65, R130, G137, T138, W150, D170, R172, E176, and S210 each coordinate dGMP.

The protein belongs to the dNMP kinase family. Monomer.

It carries out the reaction a 2'-deoxyribonucleoside 5'-phosphate + ATP = a 2'-deoxyribonucleoside 5'-diphosphate + ADP. Allows the synthesis of deoxyribonucleoside triphosphates necessary for the rapid viral DNA replication. Phosphorylates all four dNMPs. The enzyme had the highest activity with dAMP and had about 30% less activity with dTMP and dGMP, respectively. The lowest activity was observed with dCMP as the substrate (about 35% of that with dAMP). The chain is Deoxynucleoside-5'-monophosphate kinase from Escherichia coli (Enterobacteria phage T5).